Consider the following 207-residue polypeptide: MRAAVFVCLLLGWVGVATPRRLRGPQADRLAITLYYEALCPYCMEFVTTQLNPSMVRQDRLPFTDLTLVPYGNARTNDDGNVECQHGVMECELNAWHACILEHHDIAQSLKLIACMMRGKKNRLEKCADHYQIDVGDVKNCKKTRQVNDILRKYGKETAKVSFQGVPAVALDNVYNADLSANLTDHFDAIFCAKYKEKFNKQLNNCQ.

Residues 1 to 19 form the signal peptide; that stretch reads MRAAVFVCLLLGWVGVATP. A disulfide bond links Cys40 and Cys43. Asn182 is a glycosylation site (N-linked (GlcNAc...) asparagine).

The protein belongs to the GILT family.

The protein resides in the secreted. In terms of biological role, probable lysosomal thiol reductase that can reduce protein disulfide bonds. Involved in the immune response to bacterial infection. This is GILT-like protein 2 from Drosophila melanogaster (Fruit fly).